Consider the following 218-residue polypeptide: Urease accessory protein UreG (218 aa).

Position 22–29 (22–29) interacts with GTP; sequence GPVGSGKT.

Belongs to the SIMIBI class G3E GTPase family. UreG subfamily. Homodimer. UreD, UreF and UreG form a complex that acts as a GTP-hydrolysis-dependent molecular chaperone, activating the urease apoprotein by helping to assemble the nickel containing metallocenter of UreC. The UreE protein probably delivers the nickel.

It is found in the cytoplasm. Functionally, facilitates the functional incorporation of the urease nickel metallocenter. This process requires GTP hydrolysis, probably effectuated by UreG. This is Urease accessory protein UreG from Polaromonas sp. (strain JS666 / ATCC BAA-500).